The sequence spans 86 residues: Large ribosomal subunit protein bL31B (86 aa).

This sequence belongs to the bacterial ribosomal protein bL31 family. Type B subfamily. As to quaternary structure, part of the 50S ribosomal subunit.

The chain is Large ribosomal subunit protein bL31B from Burkholderia cenocepacia (strain ATCC BAA-245 / DSM 16553 / LMG 16656 / NCTC 13227 / J2315 / CF5610) (Burkholderia cepacia (strain J2315)).